Here is a 143-residue protein sequence, read N- to C-terminus: MKSYIAKPADVQRKWYLVDAEGKTLGRLATEIATVLRGKHKPTFTPHVDGGDFVVVVNAEKIVLSGKKLDQKYYRYHTGYVGGLKEISYRDMMDKKPEEVISHAVSGMLPKNKLRSRMMTRLRVFAGAEHTHAAQNPEVLNFK.

It belongs to the universal ribosomal protein uL13 family. In terms of assembly, part of the 50S ribosomal subunit.

Functionally, this protein is one of the early assembly proteins of the 50S ribosomal subunit, although it is not seen to bind rRNA by itself. It is important during the early stages of 50S assembly. The chain is Large ribosomal subunit protein uL13 from Clostridioides difficile (strain 630) (Peptoclostridium difficile).